The primary structure comprises 443 residues: MSPSVAELLLQRLERTPPGPEGGLCSLEAAAALGLDHQTLVGAVKSLQALGEVIEAETRATTRWELSAEGEEVLRDGSPEVRLFRSVPSEGLPQSDAMKLPGAQVGFSKAMANKWLRLDKGAPGGPRIFRAVDAVQDVVQSSLRQVQEGNGGSLSERERTDLKRRKLLLEVTLKSYWIRKGSAFSTAVVRQETDLTPEMIATGSWRKLPFKAYNFSALGLPPTCGHLHPLLKVRSQLRQIFLEMGFTEMPTDNFVESSFWNFDALFQPQQHPARDQHDTFFLQDPAEAPELPANYMARVKKVHSQGGYGSQGYKYEWKVEEARKNLLRTHTTSASARALYHLARQGKFTPVKYFSIDRVFRNESLDATHLAEFHQVEGVVADRGLTLGHLMGTLQQFFTKLGISKLRFKPAYNPYTEPSMEVFSYHEGLKKWVEVGNSGVFRS.

Residues T332, 375–377 (QVE), and Y415 each bind L-phenylalanine. E417 is a Mg(2+) binding site. An L-phenylalanine-binding site is contributed by F441.

This sequence belongs to the class-II aminoacyl-tRNA synthetase family. Phe-tRNA synthetase alpha subunit type 2 subfamily. Heterotetramer; dimer of two heterodimers formed by FARSA and FARSB. Mg(2+) serves as cofactor.

It is found in the cytoplasm. The catalysed reaction is tRNA(Phe) + L-phenylalanine + ATP = L-phenylalanyl-tRNA(Phe) + AMP + diphosphate + H(+). This Gallus gallus (Chicken) protein is Phenylalanine--tRNA ligase alpha subunit (FARSA).